The chain runs to 181 residues: Protein Syd (181 aa).

This sequence belongs to the Syd family.

It is found in the cell inner membrane. Functionally, interacts with the SecY protein in vivo. May bind preferentially to an uncomplexed state of SecY, thus functioning either as a chelating agent for excess SecY in the cell or as a regulatory factor that negatively controls the translocase function. This Escherichia coli O157:H7 protein is Protein Syd.